The chain runs to 135 residues: Large ribosomal subunit protein uL16c (135 aa).

It belongs to the universal ribosomal protein uL16 family. In terms of assembly, part of the 50S ribosomal subunit.

The protein resides in the plastid. It localises to the chloroplast. The protein is Large ribosomal subunit protein uL16c of Gossypium hirsutum (Upland cotton).